The chain runs to 498 residues: Elastase (498 aa).

A signal peptide spans 1–23; that stretch reads MKKVSTLDLLFVAIMGVSPAAFA. A propeptide spanning residues 24-197 is cleaved from the precursor; that stretch reads ADLIDVSKLP…VLDQWEGLAH (174 aa). A disulfide bridge connects residues Cys227 and Cys255. Residue Asp333 participates in Ca(2+) binding. His337 is a binding site for Zn(2+). Glu338 is a catalytic residue. 2 residues coordinate Zn(2+): His341 and Glu361. 4 residues coordinate Ca(2+): Glu369, Glu372, Asp380, and Leu382. His420 acts as the Proton donor in catalysis. An intrachain disulfide couples Cys467 to Cys494.

It belongs to the peptidase M4 family. In terms of assembly, monomer. Requires Ca(2+) as cofactor. The cofactor is Zn(2+). Post-translationally, made as a membrane-associated pre-pro-protein, which is exported to the periplasm (yielding pro-elastase) with removal of the signal peptide. Under certain conditions pro-elastase can accumulate. The pro-peptide is removed in the periplasm yielding a (mature length) 33 kDa protein, probably by autocatalysis. The pro-peptide probably remains associated with elastase and can be secreted. Further alterations (perhaps processing) seems to be required before secretion into the extracellular space.

The protein resides in the secreted. The catalysed reaction is Hydrolysis of proteins including elastin, collagen types III and IV, fibronectin and immunoglobulin A, generally with bulky hydrophobic group at P1'. Insulin B chain cleavage pattern identical to that of thermolysin, but specificity differs in other respects.. Its activity is regulated as follows. Inhibited by phosphoramidon. In terms of biological role, cleaves host elastin, collagen, IgG, and several complement components as well as endogenous pro-aminopeptidase. Autocatalyses processing of its pro-peptide. Processes the pro-peptide of pro-chitin-binding protein (cbpD). Involved in the pathogenesis of P.aeruginosa infections. The polypeptide is Elastase (lasB) (Pseudomonas aeruginosa (strain ATCC 15692 / DSM 22644 / CIP 104116 / JCM 14847 / LMG 12228 / 1C / PRS 101 / PAO1)).